The sequence spans 440 residues: Xaa-Pro dipeptidase (440 aa).

Mn(2+)-binding residues include aspartate 244, aspartate 255, histidine 336, glutamate 381, and glutamate 420.

The protein belongs to the peptidase M24B family. Bacterial-type prolidase subfamily. Mn(2+) serves as cofactor.

It carries out the reaction Xaa-L-Pro dipeptide + H2O = an L-alpha-amino acid + L-proline. In terms of biological role, splits dipeptides with a prolyl residue in the C-terminal position. The polypeptide is Xaa-Pro dipeptidase (Pseudoalteromonas translucida (strain TAC 125)).